Consider the following 342-residue polypeptide: MLTNPSQVIIRNQETLSQHRVLVLNHEADSLPKALLDVAQSVDALALDYHHYLHLAPQANAKLRCYFGHQLPHQDKYDTVIVYFPKAKPLAPYLFNLAAQHLVADGQLLVVGENKGGVKSLVKLLPKYFATGVKLDNARHCLLFGSSIIDTAPEIKLSDWTSQYQLATPQGNITICNLVGVFSEKHLDQGTELLLSHLPTLSGRVLDFGCGAGVIAAALLKAQPTLSLECIDINAMALASCELTLAANGMTAKVYPSDGLAQTSGKFDGIISNPPFHDGLASTTSIAQSFVADSAKQLQSKGIWQIVANRHLPYSDTIAAEFGQLTVPAENNKYKLYSFQQA.

It belongs to the methyltransferase superfamily. RsmC family. As to quaternary structure, monomer.

Its subcellular location is the cytoplasm. It catalyses the reaction guanosine(1207) in 16S rRNA + S-adenosyl-L-methionine = N(2)-methylguanosine(1207) in 16S rRNA + S-adenosyl-L-homocysteine + H(+). Specifically methylates the guanine in position 1207 of 16S rRNA in the 30S particle. This chain is Ribosomal RNA small subunit methyltransferase C, found in Shewanella sp. (strain MR-7).